The chain runs to 236 residues: MEQMDAHQIISFIQNSKKATPVKVYLKGDLEKIDFPSDVKTFITGNAGTIFGEWAVVEPLLEANKANIEDYVIENDRRNSAIPLLDMKNINARIEPGAVIRDQVTIGDNAVIMMGASINIGSVIGDGTMIDMNVVLGGRATVGKNCHIGAGSVLAGVVEPPSAQPVIVEDNVVVGANVVVLEGVRIGEGAVVAAGAIVTKDVAPGTVVAGIPARELKKLDAKTASKTEIMQELRQL.

Belongs to the transferase hexapeptide repeat family. DapH subfamily.

It carries out the reaction (S)-2,3,4,5-tetrahydrodipicolinate + acetyl-CoA + H2O = L-2-acetamido-6-oxoheptanedioate + CoA. It functions in the pathway amino-acid biosynthesis; L-lysine biosynthesis via DAP pathway; LL-2,6-diaminopimelate from (S)-tetrahydrodipicolinate (acetylase route): step 1/3. Catalyzes the transfer of an acetyl group from acetyl-CoA to tetrahydrodipicolinate. The protein is 2,3,4,5-tetrahydropyridine-2,6-dicarboxylate N-acetyltransferase of Listeria innocua serovar 6a (strain ATCC BAA-680 / CLIP 11262).